We begin with the raw amino-acid sequence, 244 residues long: DNA repair protein RecO (244 aa).

It belongs to the RecO family.

Its function is as follows. Involved in DNA repair and RecF pathway recombination. This is DNA repair protein RecO from Koribacter versatilis (strain Ellin345).